A 48-amino-acid chain; its full sequence is Large ribosomal subunit protein eL40 (48 aa).

Belongs to the eukaryotic ribosomal protein eL40 family.

The sequence is that of Large ribosomal subunit protein eL40 from Methanoregula boonei (strain DSM 21154 / JCM 14090 / 6A8).